The following is a 249-amino-acid chain: Carbohydrate deacetylase (249 aa).

Positions 60 and 125 each coordinate Mg(2+).

It belongs to the YdjC deacetylase family. Homodimer. Mg(2+) is required as a cofactor.

Its function is as follows. Probably catalyzes the deacetylation of acetylated carbohydrates an important step in the degradation of oligosaccharides. The polypeptide is Carbohydrate deacetylase (Thermoanaerobacter pseudethanolicus (strain ATCC 33223 / 39E) (Clostridium thermohydrosulfuricum)).